A 218-amino-acid polypeptide reads, in one-letter code: Adenylate kinase (218 aa).

ATP is bound at residue 10 to 15 (GAGKGT). Positions 30–59 (STGDMLRAAVKAGTPLGQQAKAVMESGGLV) are NMP. Residues threonine 31, arginine 36, 57–59 (GLV), 85–88 (GFPR), and glutamine 92 each bind AMP. Positions 122-159 (GRRSHPASGRTYHVKFNPPKVEGKDDITGEDLIQRKDD) are LID. ATP-binding positions include arginine 123 and 132-133 (TY). AMP-binding residues include arginine 156 and arginine 167. ATP is bound at residue glycine 203.

This sequence belongs to the adenylate kinase family. As to quaternary structure, monomer.

It localises to the cytoplasm. The catalysed reaction is AMP + ATP = 2 ADP. It participates in purine metabolism; AMP biosynthesis via salvage pathway; AMP from ADP: step 1/1. Catalyzes the reversible transfer of the terminal phosphate group between ATP and AMP. Plays an important role in cellular energy homeostasis and in adenine nucleotide metabolism. The sequence is that of Adenylate kinase from Variovorax paradoxus (strain S110).